The primary structure comprises 127 residues: Thioredoxin domain-containing protein 8 (127 aa).

In terms of domain architecture, Thioredoxin spans 1–92 (MVQIIKDTNE…SQKVTLFSRI (92 aa)). Cys-32 and Cys-35 are joined by a disulfide.

This sequence belongs to the thioredoxin family. As to expression, testis-specific. Only expressed during spermiogenesis, prominently in the Golgi apparatus of pachytene spermatocytes and round and elongated spermatids, with a transient localization in the developing acrosome of round spermatids (at protein level).

It localises to the cytoplasm. The protein localises to the golgi apparatus. May be required for post-translational modifications of proteins required for acrosomal biogenesis. May act by reducing disulfide bonds within the sperm. The sequence is that of Thioredoxin domain-containing protein 8 (TXNDC8) from Homo sapiens (Human).